A 305-amino-acid chain; its full sequence is Homoserine O-acetyltransferase (305 aa).

C142 functions as the Acyl-thioester intermediate in the catalytic mechanism. Residues K163 and S192 each contribute to the substrate site. The active-site Proton acceptor is the H235. E237 is an active-site residue. Residue R249 participates in substrate binding.

This sequence belongs to the MetA family.

The protein resides in the cytoplasm. It carries out the reaction L-homoserine + acetyl-CoA = O-acetyl-L-homoserine + CoA. The protein operates within amino-acid biosynthesis; L-methionine biosynthesis via de novo pathway; O-acetyl-L-homoserine from L-homoserine: step 1/1. Transfers an acetyl group from acetyl-CoA to L-homoserine, forming acetyl-L-homoserine. In Bacteroides fragilis (strain YCH46), this protein is Homoserine O-acetyltransferase.